We begin with the raw amino-acid sequence, 208 residues long: Superoxide dismutase [Mn] (208 aa).

Mn(2+) contacts are provided by histidine 27, histidine 81, aspartate 168, and histidine 172.

It belongs to the iron/manganese superoxide dismutase family. Homodimer. Mn(2+) is required as a cofactor.

It catalyses the reaction 2 superoxide + 2 H(+) = H2O2 + O2. Destroys superoxide anion radicals which are normally produced within the cells and which are toxic to biological systems. This Buchnera aphidicola subsp. Baizongia pistaciae (strain Bp) protein is Superoxide dismutase [Mn] (sodA).